The chain runs to 547 residues: Trigger factor-like protein TIG, Chloroplastic (547 aa).

Residues 1 to 77 (MELCVISTTT…SHGGNFRLFA (77 aa)) constitute a chloroplast transit peptide. Ala78 is modified (N-acetylalanine). Positions 271-366 (GDLAVVDISA…LFYRDLPTLD (96 aa)) constitute a PPIase FKBP-type domain.

Belongs to the FKBP-type PPIase family. Tig subfamily.

It localises to the plastid. Its subcellular location is the chloroplast. It catalyses the reaction [protein]-peptidylproline (omega=180) = [protein]-peptidylproline (omega=0). Involved in protein export. Acts as a chaperone by maintaining the newly synthesized protein in an open conformation. Functions as a peptidyl-prolyl cis-trans isomerase. This is Trigger factor-like protein TIG, Chloroplastic (TIG) from Arabidopsis thaliana (Mouse-ear cress).